A 692-amino-acid polypeptide reads, in one-letter code: MSKIRIYEYAKQNNLASKDVINFLKTENVEVSNHMSAISDEVVKKLDNKFKAKPENAKKGQNQKQSNNQQQNRQKQNQKNQSKPNKNKKQKGPKKNQQQERPAAKPAETPGKITYHGTLTVQDLAGKLNKEPAELIKKLMFLGVMATKNQDIDDDAIELICGEYDVEVEKEIILEDTDLDKYIEEDAEENLQERPAVVTIMGHVDHGKTTLLDSIRHTKVTAGEAGGITQHIGAYQVENDGKKITFLDTPGHAAFTSMRSRGAQVTDIAILVVAADDGVMPQTVEAINHAKAAEVPIIVAVNKMDKEGANPDRVMQELTEHQLIPEDWGGNTIFVNLSAIKNEGIDDLLEMILLVSEVEELKANPNAKAFGSVIDAQLDKGRGSVATLLVQNGTLHVGDPLVVGSTFGKVRAMVNDLGNRVTEVGPSTPVEITGLHGVPQAGDQFLVFKDEKKARQIGEAREQKQIDENRGTQSTVSLDDLFEQIKQGEMKELNIIVKADVQGSVEALAASLQKIEVEGVNVKIIHTGVGAITESDIILASASKAIVIGFNVRPDVNAKNAAESEKVDLRLHRVIYNAIEEIESAMKGLLDPEYQEKVIGQAEVREIFKVSRIGTIAGSYVTDGKITRDAGVRLIRDGVVLYEGELQALKRFKDDVKEVQTNYECGITISNFNDIKEGDTIEAFVMEEIERK.

A disordered region spans residues Lys51–Thr114. Residues Lys59–Pro84 show a composition bias toward low complexity. A compositionally biased stretch (basic residues) spans Asn85–Lys94. The region spanning Glu193–Lys362 is the tr-type G domain. The segment at Gly202–Thr209 is G1. GTP is bound at residue Gly202–Thr209. The segment at Gly227–His231 is G2. Positions Asp248 to Gly251 are G3. Residues Asp248–His252 and Asn302–Asp305 contribute to the GTP site. The tract at residues Asn302 to Asp305 is G4. Positions Ser338–Ile340 are G5.

The protein belongs to the TRAFAC class translation factor GTPase superfamily. Classic translation factor GTPase family. IF-2 subfamily.

The protein localises to the cytoplasm. One of the essential components for the initiation of protein synthesis. Protects formylmethionyl-tRNA from spontaneous hydrolysis and promotes its binding to the 30S ribosomal subunits. Also involved in the hydrolysis of GTP during the formation of the 70S ribosomal complex. The sequence is that of Translation initiation factor IF-2 from Oceanobacillus iheyensis (strain DSM 14371 / CIP 107618 / JCM 11309 / KCTC 3954 / HTE831).